We begin with the raw amino-acid sequence, 350 residues long: MTVIDVLPQTQRALKIVGPNAVSVNAAAPLPDIEPTDVLVRVVCVSINPVDGKAADMSPQLGATSGTDFSGVVVALGADVEADNWREANTMKPVRIGDRVFGGIFGNDPLRPHNGAFADYVAVPARLVWHIPTGTDFATAATMGAAIATVGLSLFNYLGLPLPSKSKAGLPVVTTCSAASSTNVLQLGAEAWFDYKSPTCGADIREHTNDSLAFALDCITDTASMGICYEALGSAGGRYVALDAFPVRGHTRRSVVPEWVCTPTQFGKAIRWTPPYDLEPRPYDLKCAELWYVVAQRLIDEGLIASHPLEKRNGGLSAVPEGMEEVRRGQIKGKKLVYTILDSEPIAVSA.

50–53 (VDGK) serves as a coordination point for NADP(+). Position 145–152 (145–152 (AAIATVGL)) interacts with substrate. NADP(+)-binding positions include 177-180 (SAAS), tyrosine 195, and 242-243 (LD). Residue 262 to 266 (TPTQF) participates in substrate binding. Position 331-332 (331-332 (IK)) interacts with NADP(+).

The protein belongs to the zinc-containing alcohol dehydrogenase family. As to quaternary structure, monomer.

The enzyme catalyses N-[(4E,6E,10S,12Z,14E)-6,10-dimethyl-3-oxohexadeca-4,6,12,14-tetraenoyl]-L-tyrosyl-[ACP] = (3E,5S)-3-[(2E,4E,8S,10E,12Z)-1-hydroxy-4,8-dimethyltetradeca-2,4,10,12-tetraen-1-ylidene]-5-[(4-hydroxyphenyl)methyl]pyrrolidine-2,4-dione + holo-[ACP] + H(+). Its pathway is mycotoxin biosynthesis. Trans-enoyl reductase; part of the gene cluster that mediates the biosynthesis of ilicicolin H, a 4-hydroxy-2-pyridonealkaloid that has potent and broad antifungal activities by inhibiting the mitochondrial respiration chain. IliB collaborates with the hybrid PKS-NRPS synthetase iliA to assemble the backbone of ilicicolin H. The PKS portion of iliA and trans-acting enoyl reductase iliB work together to construct an octaketide, and two methyl groups are introduced by the MT domain of iliA during the chain assembly. The nascent chain is then condensed with tyrosine, catalyzed by the iliA C domain, and the resulting PKS-NRPS hybrid is offloaded by the iliA RED domain to form an advanced tetramic acid intermediate. The biosynthesis of ilicicolin H starts with formation of the tetramic acid by the hybrid PKS-NRPS synthetase iliA with the partnering trans-enoyl reductase iliB since iliA lacks a designated enoylreductase (ER) domain. The cytochrome P450 monooxygenase iliC then catalyzes the ring expansion of the tetramate to the acyclic 2-pyridone. The pericyclase iliD further converts the acyclic 2-pyridone into 8-epi-ilicicolin H. 8-epi-ilicicolin H might then spontaneously convert to ilicicolin H since ilicicolin H is produced in the absence of the epimerase iliE, in contrast to what was observed for the Talaromyces variabilis ilicolin H biosynthetic pathway. This is Trans-enoyl reductase iliB from Hypocrea jecorina (strain QM6a) (Trichoderma reesei).